The chain runs to 250 residues: 5-oxoprolinase subunit A (250 aa).

The protein belongs to the LamB/PxpA family. Forms a complex composed of PxpA, PxpB and PxpC.

The catalysed reaction is 5-oxo-L-proline + ATP + 2 H2O = L-glutamate + ADP + phosphate + H(+). Catalyzes the cleavage of 5-oxoproline to form L-glutamate coupled to the hydrolysis of ATP to ADP and inorganic phosphate. The protein is 5-oxoprolinase subunit A of Thermus thermophilus (strain ATCC 27634 / DSM 579 / HB8).